We begin with the raw amino-acid sequence, 329 residues long: Solute carrier family 35 member B1 (329 aa).

The next 8 membrane-spanning stretches (helical) occupy residues 21–41 (AVCF…QETI), 60–80 (TLVF…IQFF), 91–111 (WLYG…NSAL), 142–162 (YPMA…LFLY), 175–195 (VFGF…LTGV), 220–240 (TLVL…LAFT), 250–270 (ILLF…TVVY), and 292–312 (VLLF…LVFL). The Di-lysine motif signature appears at 325–329 (KKTTH).

This sequence belongs to the nucleotide-sugar transporter family. SLC35B subfamily.

The protein localises to the endoplasmic reticulum membrane. Its function is as follows. Probable sugar transporter. The sequence is that of Solute carrier family 35 member B1 (slc35b1) from Danio rerio (Zebrafish).